A 300-amino-acid polypeptide reads, in one-letter code: MEPPMEQSGGEQEPGAVRLLDLPWEDVLLPHVLNWVPLRQLLRLQRVSRAFRALVQLHLARLRRFDAAQVGPQIPRAALARLLRDAEGLQELALAPCHEWLSDEDLVPVLARNPQLRSVALAGCGQLSRRALGALAEGCPRLQRLSLAHCDWVDGLALRGLADRCPALEELDLTACRQLKDEAIVYLAQRRGAGLRSLSLAVNANVGDTAVQELARNCPQLEHLDLTGCLRVGSDGVRTLAEYCPALRSLRVRHCHHVAEPSLSRLRKRGVDIDVEPPLHQALVLLQDMAGFAPFVNLQV.

Residue Met-1 is modified to N-acetylmethionine. The F-box domain maps to 19–66 (LLDLPWEDVLLPHVLNWVPLRQLLRLQRVSRAFRALVQLHLARLRRFD). Residues 113 to 269 (NPQLRSVALA…EPSLSRLRKR (157 aa)) are interaction with SMURF1. LRR repeat units lie at residues 141-162 (RLQR…RGLA), 167-188 (ALEE…VYLA), 194-215 (GLRS…QELA), 220-241 (QLEH…RTLA), and 246-267 (ALRS…SRLR).

Belongs to the FBXL15 family. As to quaternary structure, part of the SCF (SKP1-CUL1-F-box) E3 ubiquitin-protein ligase complex SCF(FBXL15) composed of CUL1, SKP1, RBX1 and FBXL15. As to expression, expressed in heart, liver, spleen, bone, muscle, brain and kidney (at protein level).

It localises to the cytoplasm. Its pathway is protein modification; protein ubiquitination. Its function is as follows. Substrate recognition component of a SCF (SKP1-CUL1-F-box protein) E3 ubiquitin-protein ligase complex which mediates the ubiquitination and subsequent proteasomal degradation of SMURF1, thereby acting as a positive regulator of the BMP signaling pathway. Required for dorsal/ventral pattern formation and bone mass maintenance. Also mediates ubiquitination of SMURF2 and WWP2. This chain is F-box/LRR-repeat protein 15 (Fbxl15), found in Mus musculus (Mouse).